We begin with the raw amino-acid sequence, 833 residues long: Leucine--tRNA ligase (833 aa).

Residues 41–52 (PYPSGAGLHVGH) carry the 'HIGH' region motif. The 'KMSKS' region signature appears at 610-614 (KMSKS). Residue Lys-613 coordinates ATP.

The protein belongs to the class-I aminoacyl-tRNA synthetase family.

The protein resides in the cytoplasm. It catalyses the reaction tRNA(Leu) + L-leucine + ATP = L-leucyl-tRNA(Leu) + AMP + diphosphate. This Streptococcus gordonii (strain Challis / ATCC 35105 / BCRC 15272 / CH1 / DL1 / V288) protein is Leucine--tRNA ligase.